We begin with the raw amino-acid sequence, 677 residues long: Methionine--tRNA ligase (677 aa).

The 'HIGH' region signature appears at 15–25; the sequence is PYANGSIHLGH. The Zn(2+) site is built by Cys-146, Cys-149, Cys-159, and Cys-162. A 'KMSKS' region motif is present at residues 333–337; the sequence is KMSKS. Lys-336 contributes to the ATP binding site. One can recognise a tRNA-binding domain in the interval 575–677; sequence DFAKVDLRVA…AGAKPGHQVK (103 aa).

It belongs to the class-I aminoacyl-tRNA synthetase family. MetG type 1 subfamily. As to quaternary structure, homodimer. Zn(2+) is required as a cofactor.

The protein localises to the cytoplasm. The catalysed reaction is tRNA(Met) + L-methionine + ATP = L-methionyl-tRNA(Met) + AMP + diphosphate. Functionally, is required not only for elongation of protein synthesis but also for the initiation of all mRNA translation through initiator tRNA(fMet) aminoacylation. This chain is Methionine--tRNA ligase, found in Shigella sonnei (strain Ss046).